The following is a 181-amino-acid chain: Regulator of G-protein signaling 10 (181 aa).

The interval 1–32 is disordered; the sequence is MFNRAVSRLSRKRPPSDIHDSDGSSSSSHQSL. Residues 23–32 are compositionally biased toward low complexity; the sequence is GSSSSSHQSL. 2 positions are modified to phosphoserine: S24 and S41. The 116-residue stretch at 41–156 folds into the RGS domain; the sequence is SLENLLEDPE…LKSDLFLKHK (116 aa). C74 carries the S-palmitoyl cysteine lipid modification. The interval 158–181 is disordered; that stretch reads TEEEEEDLPDAQTAAKRASRIYNT. At S176 the chain carries Phosphoserine.

In terms of assembly, interacts with GNAZ, GNAI1 and GNAI3. Associates specifically with the activated, GTP-bound forms of GNAZ and GNAI3.

It localises to the cytoplasm. Its subcellular location is the cytosol. The protein localises to the nucleus. In terms of biological role, regulates G protein-coupled receptor signaling cascades, including signaling downstream of the muscarinic acetylcholine receptor CHRM2. Inhibits signal transduction by increasing the GTPase activity of G protein alpha subunits, thereby driving them into their inactive GDP-bound form. Modulates the activity of potassium channels that are activated in response to CHRM2 signaling. Activity on GNAZ is inhibited by palmitoylation of the G-protein. This chain is Regulator of G-protein signaling 10 (RGS10), found in Homo sapiens (Human).